Consider the following 466-residue polypeptide: UDP-N-acetylmuramoylalanine--D-glutamate ligase (466 aa).

An ATP-binding site is contributed by 128–134 (GTNGKST).

This sequence belongs to the MurCDEF family.

The protein localises to the cytoplasm. The catalysed reaction is UDP-N-acetyl-alpha-D-muramoyl-L-alanine + D-glutamate + ATP = UDP-N-acetyl-alpha-D-muramoyl-L-alanyl-D-glutamate + ADP + phosphate + H(+). It functions in the pathway cell wall biogenesis; peptidoglycan biosynthesis. Its function is as follows. Cell wall formation. Catalyzes the addition of glutamate to the nucleotide precursor UDP-N-acetylmuramoyl-L-alanine (UMA). The chain is UDP-N-acetylmuramoylalanine--D-glutamate ligase from Bartonella henselae (strain ATCC 49882 / DSM 28221 / CCUG 30454 / Houston 1) (Rochalimaea henselae).